The sequence spans 229 residues: MLSTLAKRFASGKKDRMVVFFGPPGVGKGTQAKLLEKEFNLYQISTGDALRAEIRGQTPLGKRVKGIIESGGLVDDDTIMDILQACMQKNTDNNGYIFDGIPRTIGQVEKLDALLAKMGTPLTHVLYLSVNIDELRERVCGRLFHPGSGRVYHKVTNPPKKPMTDDITGEPLIIRKDDTPEVFNQRMNQYFGTFQPCIDYYSKKGILQTFPVDGQPIDVVHKKLHAALQ.

A propeptide spanning residues 1-9 (MLSTLAKRF) is cleaved from the precursor. ATP is bound at residue 25 to 30 (GVGKGT). The segment at 45–74 (STGDALRAEIRGQTPLGKRVKGIIESGGLV) is NMP. Residues Thr-46, Arg-51, 72–74 (GLV), 100–103 (GIPR), and Gln-107 contribute to the AMP site. The segment at 141–178 (GRLFHPGSGRVYHKVTNPPKKPMTDDITGEPLIIRKDD) is LID. Arg-142 contacts ATP. The AMP site is built by Arg-175 and Arg-186. Gly-214 lines the ATP pocket.

This sequence belongs to the adenylate kinase family.

Its subcellular location is the hydrogenosome. The enzyme catalyses AMP + ATP = 2 ADP. Functionally, catalyzes the reversible transfer of the terminal phosphate group between ATP and AMP. Plays an important role in cellular energy homeostasis and in adenine nucleotide metabolism. The polypeptide is Adenylate kinase (Trichomonas vaginalis).